A 2002-amino-acid polypeptide reads, in one-letter code: MEERKHETMNPAHVLFDRFVQATTCKGTLKAFQELCDHLELKPKDYRSFYHKLKSKLNYWKAKALWAKLDKRGSHKDYKKGKACTNTKCLIIGAGPCGLRTAIDLSLLGAKVVVIEKRDAFSRNNVLHLWPFTIHDLRGLGAKKFYGKFCAGAIDHISIRQLQLILLKVALILGIEIHVNVEFQGLIQPPEDQENERIGWRALVHPKTHPVSEYEFEVIIGGDGRRNTLEGFRRKEFRGKLAIAITANFINRNTTAEAKVEEISGVAFIFNQKFFQELREATGIDLENIVYYKDDTHYFVMTAKKQSLLDKGVILHDYADTELLLSRENVDQEALLSYAREAADFSTQQQLPSLDFAINHYGQPDVAMFDFTCMYASENAALVREQNGHQLLVALVGDSLLEPFWPMGTGIARGFLAAMDSAWMVRSWSLGTSPLEVLAERESIYRLLPQTTPENVSKNFSQYSIDPVTRYPNINVNFLRPSQVRHLYDTGETKDIHLEMESLVNSRTTPKLTRNESVARSSKLLGWCQRQTDGYAGVNVTDLTMSWKSGLALCAIIHRYRPDLIDFDSLDEQNVEKNNQLAFDIAEKELGISPIMTGKEMASVGEPDKLSMVMYLTQFYEMFKDSLPSSDTLDLNAEEKAVLIASTRSPISFLSKLGQTISRKRSPKDKKEKDLDGAGKRRKTSQSEEEEAPRGHRGERPTLVSTLTDRRMDVAVGNQNKVKYMATQLLAKFEENAPAQSIGIRRQGSMKKEFPQNLGGSDTCYFCQKRVYVMERLSAEGKFFHRSCFKCEYCATTLRLSAYAYDIEDGKFYCKPHYCYRLSGYAQRKRPAVAPLSGKEAKGPLQDGATTDANGRANAVASSTERTPGSGVNGLEEPSIAKRLRGTPERIELENYRLSLRQAEALQEVPEETQAEHNLSSVLDTGAEEDVASSSSESEMEEEGEEEEEEPRLPPSDLGGVPWKEAVRIHALLKGKSEEELEASKSFGPGNEEEEEEEEEYEEEEEEDYDEEEEESSEAGNQRLQQVMHAADPLEIQADVHWTHIREREEEERMAPASESSASGAPLDENDLEEDVDSEPAEIEGEAAEDGDPGDTGAELDDDQHWSDSPSDADRELRLPCPAEGEAELELRVSEDEEKLPASPKHQERGPSQATSPIRSPQESALLFIPVHSPSTEGPQLPPVPAATQEKSPEERLFPEPLLPKEKPKADAPSDLKAVHSPIRSQPVTLPEARTPVSPGSPQPQPPVAASTPPPSPLPICSQPQPSTEATVPSPTQSPIRFQPAPAKTSTPLAPLPVQSQSDTKDRLGSPLAVDEALRRSDLVEEFWMKSAEIRRSLGLTPVDRSKGPEPSFPTPAFRPVSLKSYSVEKSPQDEGLHLLKPLSIPKRLGLPKPEGEPLSLPTPRSPSDRELRSAQEERRELSSSSGLGLHGSSSNMKTLGSQSFNTSDSAMLTPPSSPPPPPPPGEEPATLRRKLREAEPNASVVPPPLPATWMRPPREPAQPPREEVRKSFVESVEEIPFADDVEDTYDDKTEDSSLQEKFFTPPSCWPRPEKPRHPPLAKENGRLPALEGTLQPQKRGLPLVSAEAKELAEERMRAREKSVKSQALRDAMARQLSRMQQMELASGAPRPRKASSAPSQGKERRPDSPTRPTLRGSEEPTLKHEATSEEVLSPPSDSGGPDGSFTSSEGSSGKSKKRSSLFSPRRNKKEKKSKGEGRPPEKPSSNLLEEAAAKPKSLWKSVFSGYKKDKKKKADDKSCPSTPSSGATVDSGKHRVLPVVRAELQLRRQLSFSEDSDLSSDDVLEKSSQKSRREPRTYTEEELNAKLTRRVQKAARRQAKQEELKRLHRAQIIQRQLQQVEERQRRLEERGVAVEKALRGEAGMGKKDDPKLMQEWFKLVQEKNAMVRYESELMIFARELELEDRQSRLQQELRERMAVEDHLKTEEELSEEKQILNEMLEVVEQRDSLVALLEEQRLREREEDKDLEAAMLSKGFSLNWS.

A monooxygenase domain region spans residues 2–494; sequence EERKHETMNP…RHLYDTGETK (493 aa). FAD contacts are provided by residues Cys97, 116-118, 123-125, Phe183, Tyr298, and Asp398; these read EKR and RNN. The Calponin-homology (CH) domain occupies 518 to 624; sequence VARSSKLLGW…YLTQFYEMFK (107 aa). The residue at position 649 (Ser649) is a Phosphoserine. The tract at residues 658-706 is disordered; sequence GQTISRKRSPKDKKEKDLDGAGKRRKTSQSEEEEAPRGHRGERPTLVST. The Nuclear localization signal signature appears at 663 to 684; the sequence is RKRSPKDKKEKDLDGAGKRRKT. A compositionally biased stretch (basic and acidic residues) spans 669–679; it reads DKKEKDLDGAG. Phosphoserine occurs at positions 685 and 687. Residues 762 to 824 enclose the LIM zinc-binding domain; it reads DTCYFCQKRV…KPHYCYRLSG (63 aa). 8 residues coordinate Zn(2+): Cys764, Cys767, His785, Cys788, Cys791, Cys794, Cys814, and His817. Residues 835–883 are disordered; the sequence is PLSGKEAKGPLQDGATTDANGRANAVASSTERTPGSGVNGLEEPSIAKR. Thr887 is subject to Phosphothreonine. Disordered regions lie at residues 907–1313, 1335–1776, and 1791–1821; these read QEVP…SPLA, RRSL…GKHR, and LSFS…TYTE. The span at 938-950 shows a compositional bias: acidic residues; the sequence is SEMEEEGEEEEEE. Ser977 bears the Phosphoserine mark. Over residues 991 to 1017 the composition is skewed to acidic residues; it reads NEEEEEEEEEYEEEEEEDYDEEEEESS. A compositionally biased stretch (basic and acidic residues) spans 1041–1054; sequence HWTHIREREEEERM. Positions 1055 to 1066 are enriched in low complexity; sequence APASESSASGAP. Over residues 1068–1102 the composition is skewed to acidic residues; sequence DENDLEEDVDSEPAEIEGEAAEDGDPGDTGAELDD. Residues Ser1134, Ser1143, Ser1160, and Ser1192 each carry the phosphoserine modification. Residues 1150-1163 show a composition bias toward polar residues; the sequence is GPSQATSPIRSPQE. Residues 1191-1218 show a composition bias toward basic and acidic residues; sequence KSPEERLFPEPLLPKEKPKADAPSDLKA. Over residues 1239–1258 the composition is skewed to pro residues; it reads PGSPQPQPPVAASTPPPSPL. 2 stretches are compositionally biased toward polar residues: residues 1268–1280 and 1288–1302; these read TEAT…QSPI and KTST…QSQS. Residue Ser1274 is modified to Phosphoserine. At Thr1276 the chain carries Phosphothreonine. Ser1278 carries the post-translational modification Phosphoserine. Phosphoserine occurs at positions 1310 and 1337. Residue Thr1341 is modified to Phosphothreonine. Ser1371 and Ser1384 each carry phosphoserine. Residues 1407 to 1422 are compositionally biased toward basic and acidic residues; the sequence is PSDRELRSAQEERREL. Over residues 1423–1435 the composition is skewed to low complexity; that stretch reads SSSSGLGLHGSSS. Ser1433 bears the Phosphoserine mark. Residues 1436-1451 show a composition bias toward polar residues; that stretch reads NMKTLGSQSFNTSDSA. At Thr1454 the chain carries Phosphothreonine. The segment covering 1456-1467 has biased composition (pro residues); the sequence is PSSPPPPPPPGE. Acidic residues predominate over residues 1516–1530; that stretch reads SVEEIPFADDVEDTY. Residues 1588 to 1604 show a composition bias toward basic and acidic residues; that stretch reads EAKELAEERMRAREKSV. Ser1649 carries the post-translational modification Phosphoserine. A Phosphothreonine modification is found at Thr1651. Positions 1657–1668 are enriched in basic and acidic residues; that stretch reads GSEEPTLKHEAT. Residues 1674–1694 are compositionally biased toward low complexity; sequence SPPSDSGGPDGSFTSSEGSSG. Residues 1695–1713 show a composition bias toward basic residues; sequence KSKKRSSLFSPRRNKKEKK. Ser1701 and Ser1704 each carry phosphoserine. Polar residues predominate over residues 1760–1769; it reads CPSTPSSGAT. A compositionally biased stretch (basic and acidic residues) spans 1804–1820; that stretch reads VLEKSSQKSRREPRTYT. Residues 1821–1992 are a coiled coil; the sequence is EEELNAKLTR…EEDKDLEAAM (172 aa). A bMERB domain is found at 1841–1990; the sequence is KQEELKRLHR…EREEDKDLEA (150 aa). Ser1912 bears the Phosphoserine mark.

Belongs to the Mical family. In terms of assembly, interacts with RAB1B, RAB8A, RAB10, RAB13 and RAB15 (in their GTP-bound forms); binding to RAB1B is of low affinity compared to other Rab proteins; at least in case of RAB8A can bind 2 molecules of RAB8A simultaneously through a high and a low affinity binding site, respectively. Interacts with ERC1 and RAB8A; may bridge ERC1 with RAB8A. Interacts with KIF23 and ERC1; enhances the interaction between KIF23 and ERC1. Interacts with NINL isoform 2. Requires FAD as cofactor. As to expression, ubiquitous.

The protein resides in the cytoplasm. Its subcellular location is the cell cortex. The protein localises to the cytoskeleton. It is found in the nucleus. It localises to the midbody. The protein resides in the spindle. Its subcellular location is the cilium basal body. The enzyme catalyses L-methionyl-[F-actin] + NADPH + O2 + H(+) = L-methionyl-(R)-S-oxide-[F-actin] + NADP(+) + H2O. Functionally, monooxygenase that promotes depolymerization of F-actin by mediating oxidation of specific methionine residues on actin to form methionine-sulfoxide, resulting in actin filament disassembly and preventing repolymerization. In the absence of actin, it also functions as a NADPH oxidase producing H(2)O(2). Seems to act as Rab effector protein and plays a role in vesicle trafficking. Involved in exocytic vesicles tethering and fusion: the monooxygenase activity is required for this process and implicates RAB8A associated with exocytotic vesicles. Required for cytokinesis. Contributes to stabilization and/or maturation of the intercellular bridge independently of its monooxygenase activity. Promotes recruitment of Rab8 and ERC1 to the intercellular bridge, and together these proteins are proposed to function in timely abscission. The protein is [F-actin]-monooxygenase MICAL3 (MICAL3) of Homo sapiens (Human).